Here is a 361-residue protein sequence, read N- to C-terminus: Phosphoserine aminotransferase (361 aa).

Arg-43 serves as a coordination point for L-glutamate. Pyridoxal 5'-phosphate-binding positions include 77 to 78 (AS), Trp-103, Thr-153, Asp-173, and Gln-196. Lys-197 carries the post-translational modification N6-(pyridoxal phosphate)lysine. Pyridoxal 5'-phosphate is bound at residue 238 to 239 (NT).

The protein belongs to the class-V pyridoxal-phosphate-dependent aminotransferase family. SerC subfamily. In terms of assembly, homodimer. It depends on pyridoxal 5'-phosphate as a cofactor.

It is found in the cytoplasm. It catalyses the reaction O-phospho-L-serine + 2-oxoglutarate = 3-phosphooxypyruvate + L-glutamate. The enzyme catalyses 4-(phosphooxy)-L-threonine + 2-oxoglutarate = (R)-3-hydroxy-2-oxo-4-phosphooxybutanoate + L-glutamate. The protein operates within amino-acid biosynthesis; L-serine biosynthesis; L-serine from 3-phospho-D-glycerate: step 2/3. Its pathway is cofactor biosynthesis; pyridoxine 5'-phosphate biosynthesis; pyridoxine 5'-phosphate from D-erythrose 4-phosphate: step 3/5. Its function is as follows. Catalyzes the reversible conversion of 3-phosphohydroxypyruvate to phosphoserine and of 3-hydroxy-2-oxo-4-phosphonooxybutanoate to phosphohydroxythreonine. This Pseudomonas aeruginosa (strain LESB58) protein is Phosphoserine aminotransferase.